The following is a 331-amino-acid chain: tRNA-cytidine(32) 2-sulfurtransferase (331 aa).

Positions 73–78 (SGGKDS) match the PP-loop motif motif. Residues cysteine 148, cysteine 151, and cysteine 239 each contribute to the [4Fe-4S] cluster site.

This sequence belongs to the TtcA family. As to quaternary structure, homodimer. Mg(2+) is required as a cofactor. Requires [4Fe-4S] cluster as cofactor.

Its subcellular location is the cytoplasm. The enzyme catalyses cytidine(32) in tRNA + S-sulfanyl-L-cysteinyl-[cysteine desulfurase] + AH2 + ATP = 2-thiocytidine(32) in tRNA + L-cysteinyl-[cysteine desulfurase] + A + AMP + diphosphate + H(+). The protein operates within tRNA modification. Its function is as follows. Catalyzes the ATP-dependent 2-thiolation of cytidine in position 32 of tRNA, to form 2-thiocytidine (s(2)C32). The sulfur atoms are provided by the cysteine/cysteine desulfurase (IscS) system. This chain is tRNA-cytidine(32) 2-sulfurtransferase, found in Burkholderia mallei (strain NCTC 10247).